The sequence spans 597 residues: Probable translation initiation factor IF-2 (597 aa).

Positions Ile4 to Leu221 constitute a tr-type G domain. Residues Gly13 to Thr20 form a G1 region. Residue Gly13–Thr20 coordinates GTP. The segment at Gly38–His42 is G2. The G3 stretch occupies residues Asp77–Gly80. Residues Asp77 to His81 and Asn131 to Asp134 each bind GTP. Positions Asn131–Asp134 are G4. A G5 region spans residues Ser199–Lys201.

The protein belongs to the TRAFAC class translation factor GTPase superfamily. Classic translation factor GTPase family. IF-2 subfamily.

Its function is as follows. Function in general translation initiation by promoting the binding of the formylmethionine-tRNA to ribosomes. Seems to function along with eIF-2. This Thermococcus sibiricus (strain DSM 12597 / MM 739) protein is Probable translation initiation factor IF-2.